Consider the following 220-residue polypeptide: Probable transcriptional regulator NRG2 (220 aa).

C2H2-type zinc fingers lie at residues 153–175 (HFCK…NRIH) and 181–205 (HICP…YRTH).

It localises to the nucleus. Transcriptional repressor. The polypeptide is Probable transcriptional regulator NRG2 (NRG2) (Saccharomyces cerevisiae (strain ATCC 204508 / S288c) (Baker's yeast)).